Reading from the N-terminus, the 198-residue chain is Probable opine utilization operon repressor (198 aa).

The protein operates within opine metabolism; mannopine biosynthesis [regulation]. Possible repressor for genes for mannityl-opine utilization and / or plasmid conjugative transfer. The polypeptide is Probable opine utilization operon repressor (opnR) (Rhizobium rhizogenes (Agrobacterium rhizogenes)).